The chain runs to 377 residues: Ribosomal RNA large subunit methyltransferase G (377 aa).

It belongs to the methyltransferase superfamily. RlmG family.

The protein localises to the cytoplasm. It carries out the reaction guanosine(1835) in 23S rRNA + S-adenosyl-L-methionine = N(2)-methylguanosine(1835) in 23S rRNA + S-adenosyl-L-homocysteine + H(+). Functionally, specifically methylates the guanine in position 1835 (m2G1835) of 23S rRNA. This chain is Ribosomal RNA large subunit methyltransferase G, found in Shewanella sp. (strain ANA-3).